Here is a 270-residue protein sequence, read N- to C-terminus: Hematopoietically-expressed homeobox protein HHEX (270 aa).

An interaction with SOX13 region spans residues 1 to 137 (MQYPHPGPAA…PFLQRPLHKR (137 aa)). A Phosphoserine modification is found at serine 53. The homeobox DNA-binding region spans 137 to 196 (RKGGQVRFSNDQTIELEKKFETQKYLSPPERKRLAKMLQLSERQVKTWFQNRRAKWRRLK). Positions 137–270 (RKGGQVRFSN…EGDKSYFNAG (134 aa)) are required for WNT signaling induction. Residues 194–270 (RLKQENPQSN…EGDKSYFNAG (77 aa)) form a disordered region. The segment covering 222–241 (PSEQNKGASLDSSQCSPSPA) has biased composition (polar residues). Positions 244–260 (EDLESEISEDSDQEVDI) are enriched in acidic residues.

As to quaternary structure, interacts with CD81; the interaction prevents nuclear translocation of HHEX. Interacts (via N-terminus) with SOX13; abolishes the SOX13-mediated inhibition of WNT-mediated transcriptional activity via competitive inhibition of the SOX13-TCF7 complex. Interacts with EIF4E; the interaction inhibits EIF4E-mediated mRNA nuclear export. As to expression, liver and promyelocytic leukemia cell line HL-60.

The protein resides in the nucleus. It localises to the nuclear body. The protein localises to the cytoplasm. Recognizes the DNA sequence 5'-ATTAA-3'. Transcriptional repressor. Activator of WNT-mediated transcription in conjunction with CTNNB1. Establishes anterior identity at two levels; acts early to enhance canonical WNT-signaling by repressing expression of TLE4, and acts later to inhibit NODAL-signaling by directly targeting NODAL. Inhibits EIF4E-mediated mRNA nuclear export. May play a role in hematopoietic differentiation. In Homo sapiens (Human), this protein is Hematopoietically-expressed homeobox protein HHEX (HHEX).